The primary structure comprises 563 residues: Eukaryotic translation initiation factor 3 subunit D-1 (563 aa).

The interval 98–136 (VQKPPHQRGRFRNMRGRGGRGRNPRGGLNNHHHHGMTTL) is disordered. Basic residues predominate over residues 100 to 120 (KPPHQRGRFRNMRGRGGRGRN). The RNA gate stretch occupies residues 291–305 (EFDLLTVNESSVEPP).

It belongs to the eIF-3 subunit D family. In terms of assembly, component of the eukaryotic translation initiation factor 3 (eIF-3) complex. The eIF-3 complex interacts with pix.

The protein localises to the cytoplasm. Functionally, mRNA cap-binding component of the eukaryotic translation initiation factor 3 (eIF-3) complex, which is involved in protein synthesis of a specialized repertoire of mRNAs and, together with other initiation factors, stimulates binding of mRNA and methionyl-tRNAi to the 40S ribosome. The eIF-3 complex specifically targets and initiates translation of a subset of mRNAs involved in cell proliferation. In the eIF-3 complex, eif3d specifically recognizes and binds the 7-methylguanosine cap of a subset of mRNAs. In Drosophila pseudoobscura pseudoobscura (Fruit fly), this protein is Eukaryotic translation initiation factor 3 subunit D-1.